Consider the following 117-residue polypeptide: Hemerythrin subunit alpha (117 aa).

Positions 24, 53, 57, 72, 76, 105, and 110 each coordinate Fe cation.

It belongs to the hemerythrin family. Octamer composed of two types of chains: alpha and beta.

Functionally, hemerythrin is a respiratory protein in blood cells of certain marine worms. The oxygen-binding site in each chain contains two iron atoms. This chain is Hemerythrin subunit alpha, found in Lingula reevii (Inarticulated brachiopod).